The sequence spans 274 residues: Rhamnulose-1-phosphate aldolase (274 aa).

Residue glutamate 117 is part of the active site. Residues histidine 141, histidine 143, and histidine 212 each contribute to the Zn(2+) site.

Belongs to the aldolase class II family. RhaD subfamily. As to quaternary structure, homotetramer. Zn(2+) is required as a cofactor.

It localises to the cytoplasm. It carries out the reaction L-rhamnulose 1-phosphate = (S)-lactaldehyde + dihydroxyacetone phosphate. It participates in carbohydrate degradation; L-rhamnose degradation; glycerone phosphate from L-rhamnose: step 3/3. In terms of biological role, catalyzes the reversible cleavage of L-rhamnulose-1-phosphate to dihydroxyacetone phosphate (DHAP) and L-lactaldehyde. The chain is Rhamnulose-1-phosphate aldolase from Escherichia coli O7:K1 (strain IAI39 / ExPEC).